The primary structure comprises 613 residues: Myosin light chain kinase 2, skeletal/cardiac muscle (613 aa).

A compositionally biased stretch (polar residues) spans Met1–Thr20. The segment at Met1–Pro168 is disordered. Residues Ser32–Gly55 are compositionally biased toward basic and acidic residues. The segment covering Ala56 to Pro66 has biased composition (pro residues). The span at Ser67–Asp83 shows a compositional bias: basic and acidic residues. Positions Ser95–Ala105 are enriched in gly residues. Low complexity predominate over residues Glu106 to Ala122. Positions Lys145–Arg158 are enriched in basic and acidic residues. Phosphoserine is present on residues Ser161, Ser167, and Ser169. Positions Glu219–Asp240 are disordered. Residues Met302–Leu557 enclose the Protein kinase domain. ATP contacts are provided by residues Leu308–Val316 and Lys331. The active-site Proton acceptor is the Asp423. At Thr462 the chain carries Phosphothreonine. The segment at Ile591–Ser603 is calmodulin-binding.

This sequence belongs to the protein kinase superfamily. CAMK Ser/Thr protein kinase family. May interact with centrin.

The protein localises to the cytoplasm. It carries out the reaction L-seryl-[myosin light chain] + ATP = O-phospho-L-seryl-[myosin light chain] + ADP + H(+). It catalyses the reaction L-threonyl-[myosin light chain] + ATP = O-phospho-L-threonyl-[myosin light chain] + ADP + H(+). In terms of biological role, implicated in the level of global muscle contraction and cardiac function. Phosphorylates a specific serine in the N-terminus of a myosin light chain. This is Myosin light chain kinase 2, skeletal/cardiac muscle (Mylk2) from Mus musculus (Mouse).